Consider the following 571-residue polypeptide: Urease subunit alpha (571 aa).

The region spanning Gly134 to Phe571 is the Urease domain. Ni(2+) is bound by residues His139, His141, and Lys222. Position 222 is an N6-carboxylysine (Lys222). His224 contributes to the substrate binding site. The Ni(2+) site is built by His251 and His277. Catalysis depends on His325, which acts as the Proton donor. Residue Asp365 coordinates Ni(2+).

The protein belongs to the metallo-dependent hydrolases superfamily. Urease alpha subunit family. In terms of assembly, heterotrimer of UreA (gamma), UreB (beta) and UreC (alpha) subunits. Three heterotrimers associate to form the active enzyme. Ni cation is required as a cofactor. Carboxylation allows a single lysine to coordinate two nickel ions.

Its subcellular location is the cytoplasm. It catalyses the reaction urea + 2 H2O + H(+) = hydrogencarbonate + 2 NH4(+). The protein operates within nitrogen metabolism; urea degradation; CO(2) and NH(3) from urea (urease route): step 1/1. In Bordetella bronchiseptica (strain ATCC BAA-588 / NCTC 13252 / RB50) (Alcaligenes bronchisepticus), this protein is Urease subunit alpha.